Here is a 297-residue protein sequence, read N- to C-terminus: tRNA pseudouridine synthase B (297 aa).

The active-site Nucleophile is the Asp39.

Belongs to the pseudouridine synthase TruB family. Type 1 subfamily.

The enzyme catalyses uridine(55) in tRNA = pseudouridine(55) in tRNA. Responsible for synthesis of pseudouridine from uracil-55 in the psi GC loop of transfer RNAs. The polypeptide is tRNA pseudouridine synthase B (Lactobacillus johnsonii (strain CNCM I-12250 / La1 / NCC 533)).